The chain runs to 792 residues: Leucine--tRNA ligase (792 aa).

Residues 39 to 50 (PYPSAAGLHLGH) carry the 'HIGH' region motif. Residues 569-573 (KMSKS) carry the 'KMSKS' region motif. Lys572 lines the ATP pocket.

It belongs to the class-I aminoacyl-tRNA synthetase family.

Its subcellular location is the cytoplasm. It catalyses the reaction tRNA(Leu) + L-leucine + ATP = L-leucyl-tRNA(Leu) + AMP + diphosphate. In Mycoplasma genitalium (strain ATCC 33530 / DSM 19775 / NCTC 10195 / G37) (Mycoplasmoides genitalium), this protein is Leucine--tRNA ligase.